The sequence spans 74 residues: MIKHSWIHLYVMASAMSSSPIFFFFQRWSLTLSLRLECSSAIIKPTAASNSCVQVNLPPSMCDYRHEPLCLAFL.

A helical membrane pass occupies residues 7–26 (IHLYVMASAMSSSPIFFFFQ).

The protein resides in the membrane. This is an uncharacterized protein from Homo sapiens (Human).